Reading from the N-terminus, the 359-residue chain is Cytochrome c oxidase subunit 2 (359 aa).

The N-terminal stretch at 1–28 (MEQQNKRGLKRKALLGGVLGLGGLAMAG) is a signal peptide. C29 carries the S-diacylglycerol cysteine lipid modification. 2 consecutive transmembrane segments (helical) span residues 64-84 (VWVA…TAIF) and 107-127 (VPLE…LFFF). Residues 168–203 (PGGQDYQGSDPERQAAAEASKKDPSGDNPIHGNSKS) form a disordered region. The span at 177–192 (DPERQAAAEASKKDPS) shows a compositional bias: basic and acidic residues. Cu cation-binding residues include H244, C285, E287, C289, H293, and M296. The disordered stretch occupies residues 335-359 (YATSTSPFVSDRTATRDGENTQSNA).

Associates with subunits I, III and IV to form cytochrome c oxidase. The 4 subunit cytochrome c oxidase forms a supercomplex with the menaquinol-cytochrome c reductase complex (cytochrome bc1). It depends on binuclear copper center (CuA) as a cofactor.

The protein resides in the cell membrane. The enzyme catalyses 4 Fe(II)-[cytochrome c] + O2 + 8 H(+)(in) = 4 Fe(III)-[cytochrome c] + 2 H2O + 4 H(+)(out). Its function is as follows. Subunits I and II form the functional core of the enzyme complex. Electrons originating in cytochrome c are transferred via heme a and Cu(A) to the binuclear center formed by heme a3 and Cu(B). This is Cytochrome c oxidase subunit 2 (ctaC) from Corynebacterium glutamicum (strain ATCC 13032 / DSM 20300 / JCM 1318 / BCRC 11384 / CCUG 27702 / LMG 3730 / NBRC 12168 / NCIMB 10025 / NRRL B-2784 / 534).